Here is a 353-residue protein sequence, read N- to C-terminus: Quinolinate synthase (353 aa).

The iminosuccinate site is built by His-49 and Ser-70. Cys-115 contributes to the [4Fe-4S] cluster binding site. Iminosuccinate-binding positions include 141–143 (YAN) and Ser-158. Cys-202 contributes to the [4Fe-4S] cluster binding site. Residues 228–230 (HPE) and Thr-245 contribute to the iminosuccinate site. Position 299 (Cys-299) interacts with [4Fe-4S] cluster.

It belongs to the quinolinate synthase family. Type 1 subfamily. The cofactor is [4Fe-4S] cluster.

The protein resides in the cytoplasm. It carries out the reaction iminosuccinate + dihydroxyacetone phosphate = quinolinate + phosphate + 2 H2O + H(+). Its pathway is cofactor biosynthesis; NAD(+) biosynthesis; quinolinate from iminoaspartate: step 1/1. Its function is as follows. Catalyzes the condensation of iminoaspartate with dihydroxyacetone phosphate to form quinolinate. This is Quinolinate synthase from Hahella chejuensis (strain KCTC 2396).